A 273-amino-acid chain; its full sequence is Large ribosomal subunit protein uL2cz/uL2cy (273 aa).

Residues 224-273 form a disordered region; the sequence is NPVDHPHGGGEGRAPIGRKKPATPWGYPALGRRSRKRNKYSDRFILRRRK. Positions 262–273 are enriched in basic and acidic residues; that stretch reads KYSDRFILRRRK.

This sequence belongs to the universal ribosomal protein uL2 family. As to quaternary structure, part of the 50S ribosomal subunit.

It localises to the plastid. It is found in the chloroplast. This Piper cenocladum (Ant piper) protein is Large ribosomal subunit protein uL2cz/uL2cy (rpl2-A).